The sequence spans 143 residues: Large ribosomal subunit protein uL11 (143 aa).

The protein belongs to the universal ribosomal protein uL11 family. As to quaternary structure, part of the ribosomal stalk of the 50S ribosomal subunit. Interacts with L10 and the large rRNA to form the base of the stalk. L10 forms an elongated spine to which L12 dimers bind in a sequential fashion forming a multimeric L10(L12)X complex. One or more lysine residues are methylated.

Forms part of the ribosomal stalk which helps the ribosome interact with GTP-bound translation factors. This chain is Large ribosomal subunit protein uL11, found in Novosphingobium aromaticivorans (strain ATCC 700278 / DSM 12444 / CCUG 56034 / CIP 105152 / NBRC 16084 / F199).